Consider the following 397-residue polypeptide: CCA-adding enzyme (397 aa).

ATP-binding residues include Gly-26 and Arg-29. Residues Gly-26 and Arg-29 each contribute to the CTP site. Mg(2+) is bound by residues Asp-39 and Asp-41. ATP contacts are provided by Arg-110, Asp-153, Arg-156, Arg-159, and Arg-162. CTP is bound by residues Arg-110, Asp-153, Arg-156, Arg-159, and Arg-162.

This sequence belongs to the tRNA nucleotidyltransferase/poly(A) polymerase family. Bacterial CCA-adding enzyme type 3 subfamily. As to quaternary structure, homodimer. Mg(2+) is required as a cofactor.

The enzyme catalyses a tRNA precursor + 2 CTP + ATP = a tRNA with a 3' CCA end + 3 diphosphate. The catalysed reaction is a tRNA with a 3' CCA end + 2 CTP + ATP = a tRNA with a 3' CCACCA end + 3 diphosphate. Its function is as follows. Catalyzes the addition and repair of the essential 3'-terminal CCA sequence in tRNAs without using a nucleic acid template. Adds these three nucleotides in the order of C, C, and A to the tRNA nucleotide-73, using CTP and ATP as substrates and producing inorganic pyrophosphate. tRNA 3'-terminal CCA addition is required both for tRNA processing and repair. Also involved in tRNA surveillance by mediating tandem CCA addition to generate a CCACCA at the 3' terminus of unstable tRNAs. While stable tRNAs receive only 3'-terminal CCA, unstable tRNAs are marked with CCACCA and rapidly degraded. The sequence is that of CCA-adding enzyme from Bacillus mycoides (strain KBAB4) (Bacillus weihenstephanensis).